The following is a 404-amino-acid chain: Cysteine desulfurase IscS (404 aa).

Residues 75–76 (AT), asparagine 155, glutamine 183, and 203–205 (SAH) each bind pyridoxal 5'-phosphate. Residue lysine 206 is modified to N6-(pyridoxal phosphate)lysine. Threonine 243 contacts pyridoxal 5'-phosphate. Residue cysteine 328 is the Cysteine persulfide intermediate of the active site. Cysteine 328 provides a ligand contact to [2Fe-2S] cluster.

It belongs to the class-V pyridoxal-phosphate-dependent aminotransferase family. NifS/IscS subfamily. Homodimer. Forms a heterotetramer with IscU, interacts with other sulfur acceptors. Requires pyridoxal 5'-phosphate as cofactor.

The protein resides in the cytoplasm. The catalysed reaction is (sulfur carrier)-H + L-cysteine = (sulfur carrier)-SH + L-alanine. The protein operates within cofactor biosynthesis; iron-sulfur cluster biosynthesis. In terms of biological role, master enzyme that delivers sulfur to a number of partners involved in Fe-S cluster assembly, tRNA modification or cofactor biosynthesis. Catalyzes the removal of elemental sulfur atoms from cysteine to produce alanine. Functions as a sulfur delivery protein for Fe-S cluster synthesis onto IscU, an Fe-S scaffold assembly protein, as well as other S acceptor proteins. This is Cysteine desulfurase IscS from Vibrio campbellii (strain ATCC BAA-1116).